Reading from the N-terminus, the 136-residue chain is General odorant-binding protein 57d (136 aa).

The signal sequence occupies residues 1-29 (MPEKMSLRLVPHLACIIFILEIQFRIADS). Cystine bridges form between C33/C70, C66/C118, and C107/C127.

Belongs to the PBP/GOBP family.

Its function is as follows. Present in the aqueous fluid surrounding olfactory sensory dendrites and are thought to aid in the capture and transport of hydrophobic odorants into and through this fluid. This Drosophila melanogaster (Fruit fly) protein is General odorant-binding protein 57d.